The primary structure comprises 239 residues: tRNA (guanine-N(7)-)-methyltransferase (239 aa).

E69, E94, D121, and D144 together coordinate S-adenosyl-L-methionine. Residue D144 is part of the active site. A substrate-binding site is contributed by K148. Residues 150–155 (RHNKRR) form an interaction with RNA region. Residues D180 and 217 to 220 (TKFE) contribute to the substrate site.

Belongs to the class I-like SAM-binding methyltransferase superfamily. TrmB family. In terms of assembly, monomer.

It catalyses the reaction guanosine(46) in tRNA + S-adenosyl-L-methionine = N(7)-methylguanosine(46) in tRNA + S-adenosyl-L-homocysteine. It functions in the pathway tRNA modification; N(7)-methylguanine-tRNA biosynthesis. Catalyzes the formation of N(7)-methylguanine at position 46 (m7G46) in tRNA. The polypeptide is tRNA (guanine-N(7)-)-methyltransferase (Yersinia pseudotuberculosis serotype I (strain IP32953)).